Reading from the N-terminus, the 40-residue chain is U2-myrmicitoxin-Tb1a (40 aa).

The signal sequence occupies residues 1-3 (AEA). The propeptide occupies 4–29 (MAEAMADAMADAMADAMADAMAEAAA). An Arginine amide modification is found at arginine 39.

It belongs to the formicidae venom precursor-01 superfamily. Expressed by the venom gland.

Its subcellular location is the secreted. Functionally, venom protein with unknown function. Does not induce paralysis when a high dose is administered by intrathoracic injection into the blowfly Lucilia caesar. This chain is U2-myrmicitoxin-Tb1a, found in Tetramorium bicarinatum (Tramp ant).